A 535-amino-acid chain; its full sequence is MTKYIFVTGGVVSSLGKGITAASLGRLLKNRGLNVTIQKFDPYINVDPGTMSPYQHGEVFVTDDGAETDLDLGHYERFIDINLNKYSNVTTGKIYSSVLQKERRGEYLGGTVQVIPHITNEIKERVYRSGRETNADVVITEIGGTVGDIESLPFLEAIRQIKSDIGRDNVMYIHCTLIPYLKAAGEMKTKPTQHSVKELRSLGIQPNIIVVRTELPVSQDMKDKLALFCDIDTKAVIEARDADTLYAVPLSLQEQNMDQIVCDHLKLDNPAADMTEWTALVNKVRNLSKKTKIALVGKYVELQDAYISVVEALRHAGYSFDTDVEVKWVNAEHVTAENVQELVGDTDGILVPGGFGDRGVEGKIVAIQYARENKVPFLGICLGMQLASIEFARNVLGLEGANSSEINPDTPYAIIDLLPEQKDVEDLGGTLRLGLYPCKLSEETNAYNAYNEPVVYERHRHRYEFNNQFRPDMEKEGFVFSGTSPDGRLVEIIELKDHPWFVAAQFHPELVSRPNRPQPLFHDFVRASITNKESK.

Residues 1 to 267 (MTKYIFVTGG…DQIVCDHLKL (267 aa)) are amidoligase domain. Ser-13 serves as a coordination point for CTP. Position 13 (Ser-13) interacts with UTP. Residue 14–19 (SLGKGI) coordinates ATP. Residue Tyr-54 coordinates L-glutamine. Asp-71 lines the ATP pocket. Asp-71 and Glu-141 together coordinate Mg(2+). Residues 148–150 (DIE), 188–193 (KTKPTQ), and Lys-224 each bind CTP. Residues 188–193 (KTKPTQ) and Lys-224 contribute to the UTP site. Residue 240 to 242 (RDA) coordinates ATP. The 243-residue stretch at 292–534 (KIALVGKYVE…VRASITNKES (243 aa)) folds into the Glutamine amidotransferase type-1 domain. Gly-354 contributes to the L-glutamine binding site. The active-site Nucleophile; for glutamine hydrolysis is the Cys-381. Residues 382–385 (LGMQ), Glu-405, and Arg-462 contribute to the L-glutamine site. Catalysis depends on residues His-507 and Glu-509.

Belongs to the CTP synthase family. Homotetramer.

It carries out the reaction UTP + L-glutamine + ATP + H2O = CTP + L-glutamate + ADP + phosphate + 2 H(+). The catalysed reaction is L-glutamine + H2O = L-glutamate + NH4(+). The enzyme catalyses UTP + NH4(+) + ATP = CTP + ADP + phosphate + 2 H(+). Its pathway is pyrimidine metabolism; CTP biosynthesis via de novo pathway; CTP from UDP: step 2/2. Allosterically activated by GTP, when glutamine is the substrate; GTP has no effect on the reaction when ammonia is the substrate. The allosteric effector GTP functions by stabilizing the protein conformation that binds the tetrahedral intermediate(s) formed during glutamine hydrolysis. Inhibited by the product CTP, via allosteric rather than competitive inhibition. Its function is as follows. Catalyzes the ATP-dependent amination of UTP to CTP with either L-glutamine or ammonia as the source of nitrogen. Regulates intracellular CTP levels through interactions with the four ribonucleotide triphosphates. The polypeptide is CTP synthase (Bacillus cereus (strain G9842)).